We begin with the raw amino-acid sequence, 212 residues long: Peptide methionine sulfoxide reductase MsrA (212 aa).

The active site involves C52.

It belongs to the MsrA Met sulfoxide reductase family.

It carries out the reaction L-methionyl-[protein] + [thioredoxin]-disulfide + H2O = L-methionyl-(S)-S-oxide-[protein] + [thioredoxin]-dithiol. The enzyme catalyses [thioredoxin]-disulfide + L-methionine + H2O = L-methionine (S)-S-oxide + [thioredoxin]-dithiol. Has an important function as a repair enzyme for proteins that have been inactivated by oxidation. Catalyzes the reversible oxidation-reduction of methionine sulfoxide in proteins to methionine. The polypeptide is Peptide methionine sulfoxide reductase MsrA (Salmonella choleraesuis (strain SC-B67)).